Consider the following 186-residue polypeptide: Interferon beta-3 (186 aa).

The signal sequence occupies residues 1-21; that stretch reads MTYRCLLPMVLLLCFSTTALS. The cysteines at positions 52 and 161 are disulfide-linked. N-linked (GlcNAc...) asparagine glycosylation is found at Asn-131 and Asn-173.

This sequence belongs to the alpha/beta interferon family. In terms of assembly, monomer.

It is found in the secreted. Its function is as follows. Has antiviral, antibacterial and anticancer activities. This is Interferon beta-3 (IFNB3) from Bos taurus (Bovine).